We begin with the raw amino-acid sequence, 21 residues long: Major outer membrane protein (21 aa).

Disulfide bond interactions within and between MOMP molecules and other components form high molecular-weight oligomers.

Its subcellular location is the cell outer membrane. In terms of biological role, structural rigidity of the outer membrane of elementary bodies and porin forming, permitting diffusion of solutes through the intracellular reticulate body membrane. In Actinobacillus suis, this protein is Major outer membrane protein.